A 439-amino-acid polypeptide reads, in one-letter code: CBL-interacting protein kinase 14 (439 aa).

The 256-residue stretch at 12–267 (YELGRLLGKG…IQKIKESTWF (256 aa)) folds into the Protein kinase domain. ATP contacts are provided by residues 18 to 26 (LGKGTFGKV) and K41. The Proton acceptor role is filled by D135. The tract at residues 153-182 (DFGLSALSESKRQDGLLHTTCGTPAYVAPE) is activation loop. In terms of domain architecture, NAF spans 298 to 333 (RKKNAHEDVKPMSVTNLNAFEIISFSKGFDLSGMFI). A PPI region spans residues 338-367 (RNEARFTSDKSASTIISKLEDVAKALNLRV).

The protein belongs to the protein kinase superfamily. CAMK Ser/Thr protein kinase family. SNF1 subfamily. Requires Mn(2+) as cofactor.

It catalyses the reaction L-seryl-[protein] + ATP = O-phospho-L-seryl-[protein] + ADP + H(+). The enzyme catalyses L-threonyl-[protein] + ATP = O-phospho-L-threonyl-[protein] + ADP + H(+). In terms of biological role, CIPK serine-threonine protein kinases interact with CBL proteins. Binding of a CBL protein to the regulatory NAF domain of CIPK protein lead to the activation of the kinase in a calcium-dependent manner. The protein is CBL-interacting protein kinase 14 (CIPK14) of Oryza sativa subsp. japonica (Rice).